The chain runs to 500 residues: Dipeptide and tripeptide permease A (500 aa).

At 1–21 (MSTANQKPTESVSLNAFKQPK) the chain is on the cytoplasmic side. Residues 22–44 (AFYLIFSIELWERFGYYGLQGIM) traverse the membrane as a helical segment. The Periplasmic portion of the chain corresponds to 45–59 (AVYLVKQLGMSEADS). A helical membrane pass occupies residues 60–80 (ITLFSSFSALVYGLVAIGGWL). Residues 81 to 89 (GDKVLGTKR) lie on the Cytoplasmic side of the membrane. The chain crosses the membrane as a helical span at residues 90 to 110 (VIMLGAIVLAIGYALVAWSGH). Position 111 (Asp-111) is a topological domain, periplasmic. A helical transmembrane segment spans residues 112 to 132 (AGIVYMGMAAIAVGNGLFKAN). Topologically, residues 133 to 153 (PSSLLSTCYEKNDPRLDGAFT) are cytoplasmic. The chain crosses the membrane as a helical span at residues 154–174 (MYYMSVNIGSFFSMIATPWLA). At 175 to 178 (AKYG) the chain is on the periplasmic side. The helical transmembrane segment at 179–199 (WSVAFALSVVGLLITIVNFAF) threads the bilayer. Topologically, residues 200–219 (CQRWVKQYGSKPDFEPINYR) are cytoplasmic. The helical transmembrane segment at 220–240 (NLLLTIIGVVALIAIATWLLH) threads the bilayer. At 241 to 246 (NQEVAR) the chain is on the periplasmic side. The chain crosses the membrane as a helical span at residues 247–267 (MALGVVAFGIVVIFGKEAFAM). The Cytoplasmic portion of the chain corresponds to 268–274 (KGAARRK). Residues 275-295 (MIVAFILMLEAIIFFVLYSQM) traverse the membrane as a helical segment. Topologically, residues 296-320 (PTSLNFFAIRNVEHSILGLAVEPEQ) are periplasmic. Residues 321-341 (YQALNPFWIIIGSPILAAIYN) traverse the membrane as a helical segment. The Cytoplasmic portion of the chain corresponds to 342–352 (KMGDTLPMPTK). The helical transmembrane segment at 353–373 (FAIGMVMCSGAFLILPLGAKF) threads the bilayer. Residues 374–378 (ASDAG) lie on the Periplasmic side of the membrane. The chain crosses the membrane as a helical span at residues 379–399 (IVSVSWLVASYGLQSIGELMI). The Cytoplasmic segment spans residues 400 to 414 (SGLGLAMVAQLVPQR). Residues 415–435 (LMGFIMGSWFLTTAGANLIGG) form a helical membrane-spanning segment. Residues 436-459 (YVAGMMAVPDNVTDPLMSLEVYGR) are Periplasmic-facing. Residues 460–480 (VFLQIGVATAVIAVLMLLTAP) form a helical membrane-spanning segment. The Cytoplasmic portion of the chain corresponds to 481–500 (KLHRMTQDDAADKAAKAAVA).

Belongs to the major facilitator superfamily. Proton-dependent oligopeptide transporter (POT/PTR) (TC 2.A.17) family. DtpA subfamily. In terms of assembly, monomer. Has a crown-like structure with a diameter of 8 nm and a central density.

It is found in the cell inner membrane. In terms of biological role, proton-dependent permease that transports di- and tripeptides as well as structurally related peptidomimetics such as aminocephalosporins into the cell. Has a clear preference for dipeptides and tripeptides composed of L-amino acids, and discriminates dipeptides on the basis of the position of charges within the substrate. The polypeptide is Dipeptide and tripeptide permease A (dtpA) (Escherichia coli (strain K12)).